Consider the following 284-residue polypeptide: D-tagatose-1,6-bisphosphate aldolase subunit GatY (284 aa).

Catalysis depends on aspartate 82, which acts as the Proton donor. Zn(2+) contacts are provided by histidine 83 and histidine 180. Glycine 181 lines the dihydroxyacetone phosphate pocket. Zn(2+) is bound at residue histidine 208. Residues 209–211 and 230–233 contribute to the dihydroxyacetone phosphate site; these read GAS and NVAT.

The protein belongs to the class II fructose-bisphosphate aldolase family. TagBP aldolase GatY subfamily. Forms a complex with GatZ. Requires Zn(2+) as cofactor.

The catalysed reaction is D-tagatofuranose 1,6-bisphosphate = D-glyceraldehyde 3-phosphate + dihydroxyacetone phosphate. It participates in carbohydrate metabolism; D-tagatose 6-phosphate degradation; D-glyceraldehyde 3-phosphate and glycerone phosphate from D-tagatose 6-phosphate: step 2/2. Catalytic subunit of the tagatose-1,6-bisphosphate aldolase GatYZ, which catalyzes the reversible aldol condensation of dihydroxyacetone phosphate (DHAP or glycerone-phosphate) with glyceraldehyde 3-phosphate (G3P) to produce tagatose 1,6-bisphosphate (TBP). Requires GatZ subunit for full activity and stability. Is involved in the catabolism of galactitol. The protein is D-tagatose-1,6-bisphosphate aldolase subunit GatY of Escherichia coli O7:K1 (strain IAI39 / ExPEC).